The sequence spans 66 residues: Large ribosomal subunit protein bL33c (66 aa).

It belongs to the bacterial ribosomal protein bL33 family.

The protein localises to the plastid. Its subcellular location is the chloroplast. This Eucalyptus globulus subsp. globulus (Tasmanian blue gum) protein is Large ribosomal subunit protein bL33c.